The following is a 236-amino-acid chain: (5-formylfuran-3-yl)methyl phosphate synthase (236 aa).

Lys27 (schiff-base intermediate with substrate) is an active-site residue. Catalysis depends on Lys85, which acts as the Proton acceptor.

It belongs to the MfnB family.

The enzyme catalyses 2 D-glyceraldehyde 3-phosphate = 4-(hydroxymethyl)-2-furancarboxaldehyde phosphate + phosphate + 2 H2O. Its pathway is cofactor biosynthesis; methanofuran biosynthesis. Functionally, catalyzes the formation of 4-(hydroxymethyl)-2-furancarboxaldehyde phosphate (4-HFC-P) from two molecules of glyceraldehyde-3-P (GA-3-P). The polypeptide is (5-formylfuran-3-yl)methyl phosphate synthase (Methanothermobacter thermautotrophicus (strain ATCC 29096 / DSM 1053 / JCM 10044 / NBRC 100330 / Delta H) (Methanobacterium thermoautotrophicum)).